The primary structure comprises 271 residues: MSRIQNTFAALAAQGRKGLIPFITAGDPDPAKTVELMHALAEGGADVIELGVPFSDPMADGPVIQRSSERALAKGVTLHSVLDDVKRFRARDQKTPVVLMGYANPIERMGADAFAAAARDAGVDGVLVVDYPPEESHDFAAKMRAAGIDPIFLLAPTSTDDRIAAVGQVASGYVYYVSLKGVTGAANLDVSSIAGKIPAIKSRVPLPVGVGFGIRDAATARAVAEVADAVVIGSRLVQLLEQAAPERAAAELAGFVAELRAAIDGAAKPAA.

Active-site proton acceptor residues include Glu-49 and Asp-60.

It belongs to the TrpA family. Tetramer of two alpha and two beta chains.

The enzyme catalyses (1S,2R)-1-C-(indol-3-yl)glycerol 3-phosphate + L-serine = D-glyceraldehyde 3-phosphate + L-tryptophan + H2O. The protein operates within amino-acid biosynthesis; L-tryptophan biosynthesis; L-tryptophan from chorismate: step 5/5. Its function is as follows. The alpha subunit is responsible for the aldol cleavage of indoleglycerol phosphate to indole and glyceraldehyde 3-phosphate. The protein is Tryptophan synthase alpha chain of Burkholderia pseudomallei (strain 1106a).